The chain runs to 399 residues: Elongation factor Tu (399 aa).

Residues 10-209 enclose the tr-type G domain; sequence KPHVNIGTIG…AVDEYIPTPE (200 aa). Residues 19-26 are G1; it reads GHVDHGKT. 19–26 provides a ligand contact to GTP; it reads GHVDHGKT. T26 is a Mg(2+) binding site. The interval 60 to 64 is G2; that stretch reads GITIA. The G3 stretch occupies residues 81-84; the sequence is DCPG. GTP contacts are provided by residues 81 to 85 and 136 to 139; these read DCPGH and NKED. A G4 region spans residues 136–139; the sequence is NKED. The tract at residues 174–176 is G5; that stretch reads SAL.

Belongs to the TRAFAC class translation factor GTPase superfamily. Classic translation factor GTPase family. EF-Tu/EF-1A subfamily. Monomer.

Its subcellular location is the cytoplasm. The enzyme catalyses GTP + H2O = GDP + phosphate + H(+). In terms of biological role, GTP hydrolase that promotes the GTP-dependent binding of aminoacyl-tRNA to the A-site of ribosomes during protein biosynthesis. The chain is Elongation factor Tu from Nitratiruptor sp. (strain SB155-2).